Here is a 666-residue protein sequence, read N- to C-terminus: DNA mismatch repair protein MutL (666 aa).

It belongs to the DNA mismatch repair MutL/HexB family.

Its function is as follows. This protein is involved in the repair of mismatches in DNA. It is required for dam-dependent methyl-directed DNA mismatch repair. May act as a 'molecular matchmaker', a protein that promotes the formation of a stable complex between two or more DNA-binding proteins in an ATP-dependent manner without itself being part of a final effector complex. In Clostridium botulinum (strain Langeland / NCTC 10281 / Type F), this protein is DNA mismatch repair protein MutL.